The sequence spans 867 residues: Protein translocase subunit SecA 1 (867 aa).

Residues Q86, 104-108 (GEGKT), and D493 each bind ATP.

This sequence belongs to the SecA family. In terms of assembly, monomer and homodimer. Part of the essential Sec protein translocation apparatus which comprises SecA, SecYEG and auxiliary proteins SecDF. Other proteins may also be involved.

The protein resides in the cell membrane. It localises to the cytoplasm. The enzyme catalyses ATP + H2O + cellular proteinSide 1 = ADP + phosphate + cellular proteinSide 2.. In terms of biological role, part of the Sec protein translocase complex. Interacts with the SecYEG preprotein conducting channel. Has a central role in coupling the hydrolysis of ATP to the transfer of proteins into and across the cell membrane, serving as an ATP-driven molecular motor driving the stepwise translocation of polypeptide chains across the membrane. The sequence is that of Protein translocase subunit SecA 1 from Corynebacterium jeikeium (strain K411).